Reading from the N-terminus, the 316-residue chain is L-lactate dehydrogenase (316 aa).

NAD(+) is bound by residues Val15, Asp37, Lys42, Tyr68, and 82-83; that span reads GL. Residues Gln85, Arg91, and 123-126 each bind substrate; that span reads NPVD. Residues 121-123 and Thr146 each bind NAD(+); that span reads ASN. 151 to 154 lines the substrate pocket; sequence DTSR. 2 residues coordinate beta-D-fructose 1,6-bisphosphate: Arg156 and His171. The active-site Proton acceptor is His178. A Phosphotyrosine modification is found at Tyr222. Residue Thr231 coordinates substrate.

Belongs to the LDH/MDH superfamily. LDH family. Homotetramer.

The protein resides in the cytoplasm. It carries out the reaction (S)-lactate + NAD(+) = pyruvate + NADH + H(+). It functions in the pathway fermentation; pyruvate fermentation to lactate; (S)-lactate from pyruvate: step 1/1. With respect to regulation, allosterically activated by fructose 1,6-bisphosphate (FBP). Functionally, catalyzes the conversion of lactate to pyruvate. The chain is L-lactate dehydrogenase from Borreliella burgdorferi (strain ATCC 35210 / DSM 4680 / CIP 102532 / B31) (Borrelia burgdorferi).